Here is a 691-residue protein sequence, read N- to C-terminus: Elongation factor G (691 aa).

The region spanning 10-284 (KRLRNIGIAA…AVVDYLPSPL (275 aa)) is the tr-type G domain. GTP contacts are provided by residues 19 to 26 (AHIDAGKT), 83 to 87 (DTPGH), and 137 to 140 (NKMD).

Belongs to the TRAFAC class translation factor GTPase superfamily. Classic translation factor GTPase family. EF-G/EF-2 subfamily.

It localises to the cytoplasm. Its function is as follows. Catalyzes the GTP-dependent ribosomal translocation step during translation elongation. During this step, the ribosome changes from the pre-translocational (PRE) to the post-translocational (POST) state as the newly formed A-site-bound peptidyl-tRNA and P-site-bound deacylated tRNA move to the P and E sites, respectively. Catalyzes the coordinated movement of the two tRNA molecules, the mRNA and conformational changes in the ribosome. This is Elongation factor G (fusA) from Thermus thermophilus (strain ATCC 27634 / DSM 579 / HB8).